The primary structure comprises 880 residues: 3-isopropylmalate dehydratase large subunit gloJ (880 aa).

3 residues coordinate [4Fe-4S] cluster: Cys457, Cys520, and Cys523.

Belongs to the aconitase/IPM isomerase family. LeuC type 2 subfamily. [4Fe-4S] cluster is required as a cofactor.

It carries out the reaction (2R,3S)-3-isopropylmalate = (2S)-2-isopropylmalate. The protein operates within mycotoxin biosynthesis. 3-isopropylmalate dehydratase large subunit; part of the gene cluster that mediates the biosynthesis of pneumocandins, lipohexapeptides of the echinocandin family that prevent fungal cell wall formation by non-competitive inhibition of beta-1,3-glucan synthase. The 10,12-dimethylmyristoyl side chain is synthesized by the reducing polyketide synthase gloL/GLPKS4. The thioesterase gloN/GLHYD exclusively interacts with gloL/GLPKS4 to maintain turnover of the polyketide side chain. The 10R,12S-dimethylmyristic acid is then transferred to the first thiolation domain of the nonribosomal peptide synthetase gloA/GLNRPS4 by the acyl-AMP ligase gloD/GLligase, followed by its acylation to L-ornithine to trigger elongation of the cyclic hexapeptide. L-ornithine, 4R-hydroxyl-L-proline (generated from L-proline by the dioxygenase gloF/GLOXY2), 3S-hydroxyl-L-homotyrosine (generated by gloG/GLHtyB, gloH/GLHtyA, gloI/GLHtyC, gloJ/GLHtyD and hydroxylated at C-3 by the dioxygenase gloM/GLOXY1), 3R-hydroxyl-L-glutamine (generated from L-glutamine probably by the dioxygenase gloE/GLOXY3) and 3S-hydroxyl-L-proline (generated from L-proline by the dioxygenase gloF/GLOXY2 to yield pneumocandin B0), or 3S-hydroxyl-4S-methyl-L-proline (generated from L-leucine by the dioxygenase gloC/GLOXY4 to yield pneumocandin A0) are sequentially added to the growing chain. The last C domain of gloA/GLNRPS4 is proposed to be responsible for cyclization by condensation to form the peptide bond between L-ornithine and 3S-hydroxyl-4S-methyl-L-proline (for pneumocandin A0) or 3S-hydroxyl-L-proline (for pneumocandin B0). Finally, the subsequent C-4 hydroxylation of 3S-hydroxyl-L-homotyrosine and L-ornithine dihydroxylation at C-4 and C-5 are performed by the cytochrome P450 monooxygenases gloP/GLP450-1 and gloO/GLP450-2, respectively. This chain is 3-isopropylmalate dehydratase large subunit gloJ, found in Glarea lozoyensis (strain ATCC 20868 / MF5171).